We begin with the raw amino-acid sequence, 192 residues long: Fe/S biogenesis protein NfuA (192 aa).

Residues Cys-150 and Cys-153 each coordinate [4Fe-4S] cluster.

It belongs to the NfuA family. In terms of assembly, homodimer. Requires [4Fe-4S] cluster as cofactor.

Functionally, involved in iron-sulfur cluster biogenesis. Binds a 4Fe-4S cluster, can transfer this cluster to apoproteins, and thereby intervenes in the maturation of Fe/S proteins. Could also act as a scaffold/chaperone for damaged Fe/S proteins. In Buchnera aphidicola subsp. Acyrthosiphon pisum (strain 5A), this protein is Fe/S biogenesis protein NfuA.